Consider the following 900-residue polypeptide: Alanine--tRNA ligase (900 aa).

Positions 567, 571, 671, and 675 each coordinate Zn(2+).

It belongs to the class-II aminoacyl-tRNA synthetase family. The cofactor is Zn(2+).

The protein localises to the cytoplasm. The enzyme catalyses tRNA(Ala) + L-alanine + ATP = L-alanyl-tRNA(Ala) + AMP + diphosphate. Catalyzes the attachment of alanine to tRNA(Ala) in a two-step reaction: alanine is first activated by ATP to form Ala-AMP and then transferred to the acceptor end of tRNA(Ala). Also edits incorrectly charged Ser-tRNA(Ala) and Gly-tRNA(Ala) via its editing domain. This is Alanine--tRNA ligase from Mycoplasma pneumoniae (strain ATCC 29342 / M129 / Subtype 1) (Mycoplasmoides pneumoniae).